A 70-amino-acid polypeptide reads, in one-letter code: DNA-directed RNA polymerase subunit epsilon (70 aa).

Belongs to the RNA polymerase subunit epsilon family. As to quaternary structure, RNAP is composed of a core of 2 alpha, a beta and a beta' subunit. The core is associated with a delta subunit, and at least one of epsilon or omega. When a sigma factor is associated with the core the holoenzyme is formed, which can initiate transcription.

It catalyses the reaction RNA(n) + a ribonucleoside 5'-triphosphate = RNA(n+1) + diphosphate. Its function is as follows. A non-essential component of RNA polymerase (RNAP). This chain is DNA-directed RNA polymerase subunit epsilon, found in Bacillus cereus (strain ATCC 14579 / DSM 31 / CCUG 7414 / JCM 2152 / NBRC 15305 / NCIMB 9373 / NCTC 2599 / NRRL B-3711).